Reading from the N-terminus, the 116-residue chain is Vesicle-associated membrane protein 5 (116 aa).

Over methionine 1–cysteine 72 the chain is Cytoplasmic. Positions glutamate 5–glutamate 65 constitute a v-SNARE coiled-coil homology domain. Phosphoserine is present on residues serine 41, serine 48, and serine 49. Residues valine 73–leucine 93 form a helical; Anchor for type IV membrane protein membrane-spanning segment. At proline 94 to asparagine 116 the chain is on the vesicular side. Residues serine 96–asparagine 116 form a disordered region.

It belongs to the synaptobrevin family. In terms of processing, (Microbial infection) Targeted and hydrolyzed by C.botulinum neurotoxin type X (BoNT/X) which hydrolyzes the 40-Arg-|-Ser-41 bond and probably inhibits neurotransmitter release. It remains unknown whether BoNT/X is ever produced, or what organisms it targets.

It is found in the cell membrane. It localises to the endomembrane system. Its subcellular location is the golgi apparatus. The protein resides in the trans-Golgi network membrane. In terms of biological role, may participate in trafficking events that are associated with myogenesis, such as myoblast fusion and/or GLUT4 trafficking. In Homo sapiens (Human), this protein is Vesicle-associated membrane protein 5 (VAMP5).